An 876-amino-acid chain; its full sequence is Alanine--tRNA ligase (876 aa).

Histidine 564, histidine 568, cysteine 666, and histidine 670 together coordinate Zn(2+).

It belongs to the class-II aminoacyl-tRNA synthetase family. As to quaternary structure, homotetramer. The cofactor is Zn(2+).

The protein localises to the cytoplasm. The catalysed reaction is tRNA(Ala) + L-alanine + ATP = L-alanyl-tRNA(Ala) + AMP + diphosphate. In terms of biological role, catalyzes the attachment of alanine to tRNA(Ala) in a two-step reaction: alanine is first activated by ATP to form Ala-AMP and then transferred to the acceptor end of tRNA(Ala). Also edits incorrectly charged Ser-tRNA(Ala) and Gly-tRNA(Ala) via its editing domain. The chain is Alanine--tRNA ligase from Salmonella paratyphi B (strain ATCC BAA-1250 / SPB7).